A 325-amino-acid chain; its full sequence is Zinc-type alcohol dehydrogenase-like protein C337.11 (325 aa).

Belongs to the zinc-containing alcohol dehydrogenase family. Quinone oxidoreductase subfamily.

It localises to the cytoplasm. Its subcellular location is the nucleus. This Schizosaccharomyces pombe (strain 972 / ATCC 24843) (Fission yeast) protein is Zinc-type alcohol dehydrogenase-like protein C337.11.